The chain runs to 212 residues: Thiamine-phosphate synthase (212 aa).

4-amino-2-methyl-5-(diphosphooxymethyl)pyrimidine-binding positions include 33–37 and asparagine 65; that span reads QMRFK. Residues aspartate 66 and aspartate 85 each contribute to the Mg(2+) site. Threonine 104 contacts 4-amino-2-methyl-5-(diphosphooxymethyl)pyrimidine. Residue 130 to 132 participates in 2-[(2R,5Z)-2-carboxy-4-methylthiazol-5(2H)-ylidene]ethyl phosphate binding; it reads TNT. Lysine 133 is a binding site for 4-amino-2-methyl-5-(diphosphooxymethyl)pyrimidine. Position 166 (glycine 166) interacts with 2-[(2R,5Z)-2-carboxy-4-methylthiazol-5(2H)-ylidene]ethyl phosphate.

This sequence belongs to the thiamine-phosphate synthase family. It depends on Mg(2+) as a cofactor.

The catalysed reaction is 2-[(2R,5Z)-2-carboxy-4-methylthiazol-5(2H)-ylidene]ethyl phosphate + 4-amino-2-methyl-5-(diphosphooxymethyl)pyrimidine + 2 H(+) = thiamine phosphate + CO2 + diphosphate. The enzyme catalyses 2-(2-carboxy-4-methylthiazol-5-yl)ethyl phosphate + 4-amino-2-methyl-5-(diphosphooxymethyl)pyrimidine + 2 H(+) = thiamine phosphate + CO2 + diphosphate. It carries out the reaction 4-methyl-5-(2-phosphooxyethyl)-thiazole + 4-amino-2-methyl-5-(diphosphooxymethyl)pyrimidine + H(+) = thiamine phosphate + diphosphate. Its pathway is cofactor biosynthesis; thiamine diphosphate biosynthesis; thiamine phosphate from 4-amino-2-methyl-5-diphosphomethylpyrimidine and 4-methyl-5-(2-phosphoethyl)-thiazole: step 1/1. Condenses 4-methyl-5-(beta-hydroxyethyl)thiazole monophosphate (THZ-P) and 2-methyl-4-amino-5-hydroxymethyl pyrimidine pyrophosphate (HMP-PP) to form thiamine monophosphate (TMP). The protein is Thiamine-phosphate synthase of Flavobacterium johnsoniae (strain ATCC 17061 / DSM 2064 / JCM 8514 / BCRC 14874 / CCUG 350202 / NBRC 14942 / NCIMB 11054 / UW101) (Cytophaga johnsonae).